Consider the following 1042-residue polypeptide: Diacylglycerol lipase-alpha (1042 aa).

The Cytoplasmic portion of the chain corresponds to 1–22 (MPGIVVFRRRWSVGSDDLVLPA). The chain crosses the membrane as a helical span at residues 23–43 (IFLFLLHTTWFVILSVVLFGL). Residues 44-60 (VYNPHEACSLNLVDHGR) are Extracellular-facing. Residues 61–81 (GYLGILLSCMIAEMAIIWLSM) traverse the membrane as a helical segment. Topologically, residues 82 to 101 (RGGILYTEPRDSMQYVLYVR) are cytoplasmic. Residues 102–122 (LAILVIEFIYAIVGIVWLTQY) form a helical membrane-spanning segment. The Extracellular segment spans residues 123–136 (YTSCNDLTAKNVTL). The N-linked (GlcNAc...) asparagine glycan is linked to Asn-133. A helical transmembrane segment spans residues 137–157 (GMVVCNWVVILSVCITVLCVF). Residues 158 to 1042 (DPTGRTFVKL…KQDELVISAR (885 aa)) lie on the Cytoplasmic side of the membrane. Residues Ser-472 and Asp-524 each act as charge relay system in the active site. Residues Ser-727, Ser-729, Ser-732, Ser-743, Ser-782, Ser-784, Ser-806, Ser-808, Ser-833, Ser-847, and Ser-952 each carry the phosphoserine modification. A disordered region spans residues 846–903 (LSKHSQDTQPLEAALGSGGVTPERPPSAAANDEEEEVGGGGGGPASRGELALHNGRLG). Residues 1014 to 1042 (LAADKIRTSTPTGHGASPAKQDELVISAR) are disordered. A Phosphothreonine modification is found at Thr-1023.

The protein belongs to the AB hydrolase superfamily. Lipase family. Interacts (via C-terminal) with CAMK2A; leading to the phosphorylation and inhibition of DAGLA enzymatic activity. Interacts (via PPXXF motif) with HOMER1 and HOMER2; this interaction is required for DAGLA membrane localization. The cofactor is Ca(2+). Phosphorylated at Ser-782 and Ser-808 by CAMK2A; phosphorylation by CAMK2A inhibits diacylglycerol lipase activity. As to expression, highly expressed in brain and pancreas.

The protein localises to the cell membrane. The protein resides in the postsynaptic density membrane. It localises to the early endosome membrane. Its subcellular location is the cell projection. It is found in the dendritic spine membrane. It catalyses the reaction a 1,2-diacyl-sn-glycerol + H2O = a 2-acylglycerol + a fatty acid + H(+). It carries out the reaction 1-octadecanoyl-2-(5Z,8Z,11Z,14Z-eicosatetraenoyl)-sn-glycerol + H2O = 2-(5Z,8Z,11Z,14Z-eicosatetraenoyl)-glycerol + octadecanoate + H(+). The enzyme catalyses 1,2-di-(9Z-octadecenoyl)-sn-glycerol + H2O = 2-(9Z-octadecenoyl)-glycerol + (9Z)-octadecenoate + H(+). The catalysed reaction is 1-(9Z-octadecenoyl)-2-(5Z,8Z,11Z,14Z-eicosatetraenoyl)-sn-glycerol + H2O = 2-(5Z,8Z,11Z,14Z-eicosatetraenoyl)-glycerol + (9Z)-octadecenoate + H(+). It catalyses the reaction 1-(9Z-octadecenoyl)-2-octadecanoyl-sn-glycerol + H2O = 2-octadecanoylglycerol + (9Z)-octadecenoate + H(+). It carries out the reaction 1-(9Z-octadecenoyl)-2-(9Z,12Z-octadecadienoyl)-sn-glycerol + H2O = 2-(9Z,12Z-octadecadienoyl)-glycerol + (9Z)-octadecenoate + H(+). The enzyme catalyses 1-(9Z-octadecenoyl)-2-O-(5Z,8Z,11Z,14Z-eicosatetraenyl)-sn-glycerol + H2O = 2-O-(5Z,8Z,11Z,14Z)-eicosatetraenylglycerol + (9Z)-octadecenoate + H(+). Inhibited by 1,2,3-triazole urea covalent inhibitors KT172, DH376 and DO34. Inhibited by p-hydroxy-mercuri-benzoate and HgCl(2), but not to PMSF. Also inhibited by RHC80267. Diacylglycerol lipase activity is inhibited by the phosphorylation of Ser-782 and Ser-808 by CAMK2A. Serine hydrolase that hydrolyzes arachidonic acid-esterified diacylglycerols (DAGs) to produce the principal endocannabinoid, 2-arachidonoylglycerol (2-AG). Preferentially hydrolyzes sn-1 fatty acids from diacylglycerols (DAG) that contain arachidonic acid (AA) esterified at the sn-2 position to biosynthesize 2-AG. Has negligible activity against other lipids including monoacylglycerols and phospholipids. Plays a key role in regulating 2-AG signaling in the central nervous system (CNS). Regulates 2-AG involved in retrograde suppression at central synapses. Supports axonal growth during development and adult neurogenesis. Plays a role for eCB signaling in the physiological regulation of anxiety and depressive behaviors. Also regulates neuroinflammatory responses in the brain, in particular, LPS-induced microglial activation. This is Diacylglycerol lipase-alpha (DAGLA) from Homo sapiens (Human).